Here is a 429-residue protein sequence, read N- to C-terminus: Gamma-glutamyl phosphate reductase (429 aa).

It belongs to the gamma-glutamyl phosphate reductase family.

It is found in the cytoplasm. The catalysed reaction is L-glutamate 5-semialdehyde + phosphate + NADP(+) = L-glutamyl 5-phosphate + NADPH + H(+). The protein operates within amino-acid biosynthesis; L-proline biosynthesis; L-glutamate 5-semialdehyde from L-glutamate: step 2/2. Functionally, catalyzes the NADPH-dependent reduction of L-glutamate 5-phosphate into L-glutamate 5-semialdehyde and phosphate. The product spontaneously undergoes cyclization to form 1-pyrroline-5-carboxylate. In Bradyrhizobium sp. (strain BTAi1 / ATCC BAA-1182), this protein is Gamma-glutamyl phosphate reductase.